We begin with the raw amino-acid sequence, 398 residues long: 1-deoxy-D-xylulose 5-phosphate reductoisomerase (398 aa).

Residues threonine 10, glycine 11, serine 12, isoleucine 13, lysine 37, asparagine 38, and asparagine 124 each coordinate NADPH. Lysine 125 provides a ligand contact to 1-deoxy-D-xylulose 5-phosphate. NADPH is bound at residue glutamate 126. Position 150 (aspartate 150) interacts with Mn(2+). Positions 151, 152, 186, and 209 each coordinate 1-deoxy-D-xylulose 5-phosphate. Glutamate 152 lines the Mn(2+) pocket. Residue glycine 215 coordinates NADPH. Positions 222, 227, 228, and 231 each coordinate 1-deoxy-D-xylulose 5-phosphate. Residue glutamate 231 coordinates Mn(2+).

It belongs to the DXR family. In terms of assembly, homodimer. It depends on Mg(2+) as a cofactor. The cofactor is Mn(2+).

The catalysed reaction is 2-C-methyl-D-erythritol 4-phosphate + NADP(+) = 1-deoxy-D-xylulose 5-phosphate + NADPH + H(+). The protein operates within isoprenoid biosynthesis; isopentenyl diphosphate biosynthesis via DXP pathway; isopentenyl diphosphate from 1-deoxy-D-xylulose 5-phosphate: step 1/6. Its function is as follows. Catalyzes the NADPH-dependent rearrangement and reduction of 1-deoxy-D-xylulose-5-phosphate (DXP) to 2-C-methyl-D-erythritol 4-phosphate (MEP). This chain is 1-deoxy-D-xylulose 5-phosphate reductoisomerase, found in Buchnera aphidicola subsp. Acyrthosiphon pisum (strain 5A).